Consider the following 330-residue polypeptide: Flotillin-like protein FloA (330 aa).

Helical transmembrane passes span 3-23 (IISV…TLYM) and 26-46 (LRLW…TLIA).

The protein belongs to the flotillin-like FloA family. Homooligomerizes.

It is found in the cell membrane. The protein resides in the membrane raft. In terms of biological role, found in functional membrane microdomains (FMM) that may be equivalent to eukaryotic membrane rafts. FMMs are highly dynamic and increase in number as cells age. Flotillins are thought to be important factors in membrane fluidity. In Sorangium cellulosum (strain So ce56) (Polyangium cellulosum (strain So ce56)), this protein is Flotillin-like protein FloA.